Consider the following 260-residue polypeptide: 3'-5' ssDNA/RNA exonuclease TatD (260 aa).

Residues E92, H128, and H153 each contribute to the a divalent metal cation site.

This sequence belongs to the metallo-dependent hydrolases superfamily. TatD-type hydrolase family. TatD subfamily. Monomer. Requires Mg(2+) as cofactor.

It is found in the cytoplasm. 3'-5' exonuclease that prefers single-stranded DNA and RNA. May play a role in the H(2)O(2)-induced DNA damage repair. The chain is 3'-5' ssDNA/RNA exonuclease TatD from Pectobacterium carotovorum subsp. carotovorum (strain PC1).